The primary structure comprises 513 residues: NAD(P)H-quinone oxidoreductase subunit 2, chloroplastic (513 aa).

Transmembrane regions (helical) follow at residues 11 to 31 (NLITILPECVLIICLLTILMI), 38 to 58 (SVWLSNIALLGLLTSTFILLF), 78 to 98 (GFTIAFRCLLTLSSALCIPLS), 112 to 132 (FLILLLTATLGGMFLCGANDL), 133 to 153 (VTIFVSLECLSLSSYLLAGQA), 167 to 187 (LLMGGASSSILVYGFSWLYGL), 219 to 239 (FGALGLWVAFVCILVGIGFKI), 256 to 276 (PTPVVAFLSVGSKAAGLALAT), 290 to 310 (WHIVLEIVAFLSMVFGNLIAA), 318 to 338 (MLAYSSISQAGYLLIAILVGN), 348 to 368 (YLLIYTFMNLGAFACTVIFGL), 389 to 409 (AFALSICLLSLAGMPPLAGFF), 422 to 442 (HLYLLVYTGLITSVISLYYYL), and 478 to 498 (LGLTLCVLASSILGFFMNPLI).

It belongs to the complex I subunit 2 family. NDH is composed of at least 16 different subunits, 5 of which are encoded in the nucleus.

The protein resides in the plastid. It is found in the chloroplast thylakoid membrane. It carries out the reaction a plastoquinone + NADH + (n+1) H(+)(in) = a plastoquinol + NAD(+) + n H(+)(out). The catalysed reaction is a plastoquinone + NADPH + (n+1) H(+)(in) = a plastoquinol + NADP(+) + n H(+)(out). Functionally, NDH shuttles electrons from NAD(P)H:plastoquinone, via FMN and iron-sulfur (Fe-S) centers, to quinones in the photosynthetic chain and possibly in a chloroplast respiratory chain. The immediate electron acceptor for the enzyme in this species is believed to be plastoquinone. Couples the redox reaction to proton translocation, and thus conserves the redox energy in a proton gradient. The protein is NAD(P)H-quinone oxidoreductase subunit 2, chloroplastic of Staurastrum punctulatum (Green alga).